Consider the following 392-residue polypeptide: Trans-2-enoyl-CoA reductase [NADH] (392 aa).

Residues 74–75 (FE), 111–112 (DA), and 141–142 (LA) contribute to the NAD(+) site. Tyrosine 227 is a substrate binding site. Tyrosine 237 functions as the Proton donor in the catalytic mechanism. Residues lysine 246 and 276–278 (VVT) each bind NAD(+).

The protein belongs to the TER reductase family. In terms of assembly, monomer.

It carries out the reaction a 2,3-saturated acyl-CoA + NAD(+) = a (2E)-enoyl-CoA + NADH + H(+). The protein operates within lipid metabolism; fatty acid biosynthesis. Functionally, involved in the fatty acid synthesis (FAS II). Catalyzes the reduction of a carbon-carbon double bond in an enoyl moiety that is covalently linked to a coenzyme A (CoA). This is Trans-2-enoyl-CoA reductase [NADH] from Brachyspira hyodysenteriae (strain ATCC 49526 / WA1).